Reading from the N-terminus, the 276-residue chain is Diaminopimelate epimerase (276 aa).

Residues N13, Q46, and N66 each coordinate substrate. C75 (proton donor) is an active-site residue. Residues 76 to 77 (GN), N159, N192, and 210 to 211 (ER) each bind substrate. The active-site Proton acceptor is the C219. 220 to 221 (GT) contacts substrate.

The protein belongs to the diaminopimelate epimerase family. In terms of assembly, homodimer.

Its subcellular location is the cytoplasm. The catalysed reaction is (2S,6S)-2,6-diaminopimelate = meso-2,6-diaminopimelate. Its pathway is amino-acid biosynthesis; L-lysine biosynthesis via DAP pathway; DL-2,6-diaminopimelate from LL-2,6-diaminopimelate: step 1/1. Its function is as follows. Catalyzes the stereoinversion of LL-2,6-diaminopimelate (L,L-DAP) to meso-diaminopimelate (meso-DAP), a precursor of L-lysine and an essential component of the bacterial peptidoglycan. This Pseudomonas syringae pv. syringae (strain B728a) protein is Diaminopimelate epimerase.